The sequence spans 854 residues: Probable inactive serine/threonine-protein kinase DDB_G0274821 (854 aa).

In terms of domain architecture, Protein kinase spans 1–266 (MPIKESFKRI…WPKLFIHPFF (266 aa)). 2 N-linked (GlcNAc...) asparagine glycosylation sites follow: Asn-32 and Asn-106. Residues 116–135 (NNNNNNNNNNNNNNNNNNNN) form a disordered region. N-linked (GlcNAc...) asparagine glycans are attached at residues Asn-163, Asn-279, Asn-283, and Asn-290. Residues 289–331 (LNKSSSSSSSSSSSSSSSSSSSSSSSLSFQQQQQPNNISSPNL) form a disordered region. Residues 292 to 322 (SSSSSSSSSSSSSSSSSSSSSSSLSFQQQQQ) show a composition bias toward low complexity. 3 N-linked (GlcNAc...) asparagine glycosylation sites follow: Asn-325, Asn-347, and Asn-365. A disordered region spans residues 384-408 (IISPNRPSSPPLSSLSSCSSSSSSS). Asn-414 carries an N-linked (GlcNAc...) asparagine glycan. Positions 425-446 (NNNNNNNNNNNNNNNNNNNNNN) are disordered. N-linked (GlcNAc...) asparagine glycosylation is found at Asn-520, Asn-541, and Asn-620. Residues 627–650 (SSPPPSSSSSSSSPSSPSSTSPSL) form a disordered region. The span at 633-650 (SSSSSSSPSSPSSTSPSL) shows a compositional bias: low complexity. The N-linked (GlcNAc...) asparagine glycan is linked to Asn-757. A helical membrane pass occupies residues 770-792 (HWRVQISFLNILFILITINNNFI).

This sequence belongs to the protein kinase superfamily. Ser/Thr protein kinase family.

The protein localises to the membrane. This Dictyostelium discoideum (Social amoeba) protein is Probable inactive serine/threonine-protein kinase DDB_G0274821.